Here is a 429-residue protein sequence, read N- to C-terminus: Glutamate-1-semialdehyde 2,1-aminomutase (429 aa).

Lys-265 is subject to N6-(pyridoxal phosphate)lysine.

The protein belongs to the class-III pyridoxal-phosphate-dependent aminotransferase family. HemL subfamily. Homodimer. It depends on pyridoxal 5'-phosphate as a cofactor.

Its subcellular location is the cytoplasm. It carries out the reaction (S)-4-amino-5-oxopentanoate = 5-aminolevulinate. It functions in the pathway porphyrin-containing compound metabolism; protoporphyrin-IX biosynthesis; 5-aminolevulinate from L-glutamyl-tRNA(Glu): step 2/2. The sequence is that of Glutamate-1-semialdehyde 2,1-aminomutase from Alkalilimnicola ehrlichii (strain ATCC BAA-1101 / DSM 17681 / MLHE-1).